Reading from the N-terminus, the 82-residue chain is Large ribosomal subunit protein uL29 (82 aa).

Belongs to the universal ribosomal protein uL29 family.

The chain is Large ribosomal subunit protein uL29 from Trichodesmium erythraeum (strain IMS101).